The primary structure comprises 418 residues: Transmembrane protease serine 11A (418 aa).

Residues 1–18 (MMYRTVGFGTRSRNLKPW) lie on the Cytoplasmic side of the membrane. Residues 19–39 (MIAVLIVLSLTVVAVTIGLLV) traverse the membrane as a helical; Signal-anchor for type II membrane protein segment. Over 40–418 (HFLVFDQKKE…RNWIASKTGI (379 aa)) the chain is Extracellular. An SEA domain is found at 47–164 (KKEYYHGSFK…SSVQVNAMSS (118 aa)). An N-linked (GlcNAc...) asparagine glycan is attached at Asn-153. Positions 187–417 (IASGVIAPKA…YRNWIASKTG (231 aa)) constitute a Peptidase S1 domain. Cysteines 212 and 228 form a disulfide. Active-site charge relay system residues include His-227 and Asp-272. The N-linked (GlcNAc...) asparagine glycan is linked to Asn-303. Intrachain disulfides connect Cys-337-Cys-353 and Cys-364-Cys-393. Ser-368 functions as the Charge relay system in the catalytic mechanism.

The protein belongs to the peptidase S1 family. May interact with ZBTB17. In terms of tissue distribution, expressed in esophagus, liver, colon and lung. Down-regulated in esophagus cancers.

It localises to the membrane. In terms of biological role, probable serine protease which may play a role in cellular senescence. Overexpression inhibits cell growth and induce G1 cell cycle arrest. This Homo sapiens (Human) protein is Transmembrane protease serine 11A (TMPRSS11A).